The primary structure comprises 739 residues: Bifunctional (p)ppGpp synthase/hydrolase RelA (739 aa).

Positions 50–149 (YIVHPIQVAG…VKLADRLHNM (100 aa)) constitute an HD domain. Mn(2+)-binding residues include His53 and His77. Catalysis depends on nucleophile, for hydrolase activity residues Glu81 and Asp82. Residue Asp144 coordinates Mn(2+). Asp264 contributes to the Mg(2+) binding site. The 62-residue stretch at 393-454 (ERIYVFTPTG…KTGDVVEIVT (62 aa)) folds into the TGS domain. The 76-residue stretch at 664–739 (EIDIYGLNRR…DVYSVKRTNG (76 aa)) folds into the ACT domain.

It belongs to the RelA/SpoT family. It depends on Mg(2+) as a cofactor. The cofactor is Mn(2+).

The enzyme catalyses GTP + ATP = guanosine 3'-diphosphate 5'-triphosphate + AMP. It catalyses the reaction guanosine 3',5'-bis(diphosphate) + H2O = GDP + diphosphate + H(+). Its pathway is purine metabolism; ppGpp biosynthesis; ppGpp from GDP: step 1/1. It participates in purine metabolism; ppGpp biosynthesis; ppGpp from GTP: step 1/2. Alpha-beta methylenyl ATP, an ATP-analog inhibitor of the synthase activity also reduces the hydrolase activity about 4-fold. Functionally, in eubacteria ppGpp (guanosine 3'-diphosphate 5'-diphosphate) is a mediator of the stringent response that coordinates a variety of cellular activities in response to changes in nutritional abundance. This enzyme catalyzes both the formation of pppGpp which is then hydrolyzed to form ppGpp, and the hydrolysis of ppGpp. The enzyme does not simultaneously display both synthase and hydrolase activities. In the structure of residues 1-385 there are 2 conformations seen, the hydrolase-OFF/synthase-ON and hydrolase-ON/synthase-OFF, suggesting there is ligand-induced signal transmission between the 2 active sites. The chain is Bifunctional (p)ppGpp synthase/hydrolase RelA (relA) from Streptococcus dysgalactiae subsp. equisimilis (Streptococcus equisimilis).